The following is a 214-amino-acid chain: uncharacterized protein (214 aa).

The transit peptide at 1–49 (MATRGAVAAAASTIWKHRRNPSLRSLSRHFNPNFNHRIIPTGFKYQVRA) directs the protein to the chloroplast.

It is found in the plastid. The protein resides in the chloroplast. This is an uncharacterized protein from Arabidopsis thaliana (Mouse-ear cress).